A 415-amino-acid polypeptide reads, in one-letter code: Mulatexin (415 aa).

The signal sequence occupies residues Met1 to Ala21. In terms of domain architecture, Chitin-binding type-1 1 spans Glu23 to Ser66. Cystine bridges form between Cys26-Cys41, Cys35-Cys47, Cys40-Cys54, and Cys60-Cys64. Residues Trp65–Arg127 are disordered. Over residues Ser67–Pro121 the composition is skewed to pro residues. The Chitin-binding type-1 2 domain occupies Asp125–Asn167. 4 cysteine pairs are disulfide-bonded: Cys128/Cys143, Cys137/Cys149, Cys142/Cys156, and Cys161/Cys165. N-linked (GlcNAc...) asparagine glycosylation occurs at Asn264.

Glycosylated.

Its subcellular location is the secreted. Chitin-binding protein which slows larval growth when consumed by the lepidopteran species S.ricini and M.brassica, but not when consumed by the mulberry specialist B.mori. Lacks chitinase activity. The protein is Mulatexin of Morus alba (White mulberry).